The primary structure comprises 149 residues: Cytochrome c oxidase subunit 5A, mitochondrial (149 aa).

Belongs to the cytochrome c oxidase subunit 5A family. In terms of assembly, component of the cytochrome c oxidase (complex IV, CIV), a multisubunit enzyme composed of a catalytic core of 3 subunits and several supernumerary subunits. The complex exists as a monomer or a dimer and forms supercomplexes (SCs) in the inner mitochondrial membrane with ubiquinol-cytochrome c oxidoreductase (cytochrome b-c1 complex, complex III, CIII).

The protein resides in the mitochondrion inner membrane. Its pathway is energy metabolism; oxidative phosphorylation. Its function is as follows. Component of the cytochrome c oxidase, the last enzyme in the mitochondrial electron transport chain which drives oxidative phosphorylation. The respiratory chain contains 3 multisubunit complexes succinate dehydrogenase (complex II, CII), ubiquinol-cytochrome c oxidoreductase (cytochrome b-c1 complex, complex III, CIII) and cytochrome c oxidase (complex IV, CIV), that cooperate to transfer electrons derived from NADH and succinate to molecular oxygen, creating an electrochemical gradient over the inner membrane that drives transmembrane transport and the ATP synthase. Cytochrome c oxidase is the component of the respiratory chain that catalyzes the reduction of oxygen to water. Electrons originating from reduced cytochrome c in the intermembrane space (IMS) are transferred via the dinuclear copper A center (CU(A)) of subunit 2 and heme A of subunit 1 to the active site in subunit 1, a binuclear center (BNC) formed by heme A3 and copper B (CU(B)). The BNC reduces molecular oxygen to 2 water molecules using 4 electrons from cytochrome c in the IMS and 4 protons from the mitochondrial matrix. The polypeptide is Cytochrome c oxidase subunit 5A, mitochondrial (Drosophila melanogaster (Fruit fly)).